The chain runs to 236 residues: Phosphoribosylaminoimidazole-succinocarboxamide synthase (236 aa).

Belongs to the SAICAR synthetase family.

It carries out the reaction 5-amino-1-(5-phospho-D-ribosyl)imidazole-4-carboxylate + L-aspartate + ATP = (2S)-2-[5-amino-1-(5-phospho-beta-D-ribosyl)imidazole-4-carboxamido]succinate + ADP + phosphate + 2 H(+). Its pathway is purine metabolism; IMP biosynthesis via de novo pathway; 5-amino-1-(5-phospho-D-ribosyl)imidazole-4-carboxamide from 5-amino-1-(5-phospho-D-ribosyl)imidazole-4-carboxylate: step 1/2. This is Phosphoribosylaminoimidazole-succinocarboxamide synthase from Pseudomonas paraeruginosa (strain DSM 24068 / PA7) (Pseudomonas aeruginosa (strain PA7)).